The following is a 1148-amino-acid chain: Envelopment polyprotein (1148 aa).

Residues 1-23 (MGKSSPVCLYLILQGLLLFDTVN) form the signal peptide. Over 24 to 496 (AKNLNELKME…PGLHGWATVL (473 aa)) the chain is Lumenal. 6 disulfide bridges follow: cysteine 34–cysteine 159, cysteine 68–cysteine 165, cysteine 117–cysteine 136, cysteine 141–cysteine 146, cysteine 183–cysteine 193, and cysteine 218–cysteine 257. Asparagine 142 is a glycosylation site (N-linked (GlcNAc...) asparagine; by host). Asparagine 357 carries N-linked (GlcNAc...) asparagine; by host glycosylation. Cystine bridges form between cysteine 386–cysteine 445, cysteine 390–cysteine 399, cysteine 415–cysteine 434, and cysteine 462–cysteine 485. Asparagine 409 is a glycosylation site (N-linked (GlcNAc...) asparagine; by host). Residues 497-517 (LLLTFCFGWVLIPTITMILLK) form a helical membrane-spanning segment. Over 518-637 (ILIAFAYLCS…LSLFRYRSRF (120 aa)) the chain is Cytoplasmic. Residues 526–543 (CSKYNTDSKFRILVEKVK) are binding to the ribonucleoprotein. 2 CCHC-type zinc fingers span residues 555 to 575 (CEVC…RKSC) and 580 to 601 (CPYC…FKVC). 2 binding to the ribonucleoprotein regions span residues 598-615 (FKVC…KKSL) and 621-635 (MQGC…RYRS). The ITAM domain maps to 621 to 644 (MQGCYRTLSLFRYRSRFFVGLVWC). Positions 625-628 (YRTL) match the YxxL motif. The helical transmembrane segment at 638–658 (FVGLVWCMLLVLELIVWAASA) threads the bilayer. Topologically, residues 659–1115 (ETQNLNDGWT…WVLGVLNGNW (457 aa)) are lumenal. Disulfide bonds link cysteine 745/cysteine 780, cysteine 749/cysteine 787, cysteine 761/cysteine 894, cysteine 775/cysteine 905, cysteine 790/cysteine 913, cysteine 816/cysteine 825, cysteine 833/cysteine 842, and cysteine 873/cysteine 877. Residues 767-787 (YEYETGWGCNPPDCPGVGTGC) form a fusion loop region. A glycan (N-linked (GlcNAc...) asparagine; by host) is linked at asparagine 937. Intrachain disulfides connect cysteine 979/cysteine 1009, cysteine 1002/cysteine 1054, cysteine 1019/cysteine 1024, cysteine 1055/cysteine 1060, and cysteine 1094/cysteine 1098. The chain crosses the membrane as a helical span at residues 1116-1136 (MVVAVLIALLILSIFLFALCC). The tract at residues 1131 to 1148 (LFALCCPRRPSYKKDHKP) is binding to the ribonucleoprotein. Residues 1137–1148 (PRRPSYKKDHKP) are Cytoplasmic-facing.

Belongs to the hantavirus envelope glycoprotein family. Homodimer. Homotetramer; forms heterotetrameric Gn-Gc spikes in the pre-fusion conformation. Interacts (via C-terminus) with the nucleoprotein. Interacts with host TUFM; this interaction contributes to the virus-induced degradation of mitochondria by autophagy, which leads to degradation of host MAVS and inhibition of type I interferon (IFN) responses. Interacts with host MAP1LC3B; this interaction contributes to the virus-induced degradation of mitochondria by autophagy, which leads to degradation of host MAVS and inhibition of type I interferon (IFN) responses. In terms of assembly, homodimer. Homotetramer; forms heterotetrameric Gn-Gc spikes in the pre-fusion conformation. Homotrimer; forms homotrimer in the post-fusion conformation at acidic pH. Interacts (via C-terminus) with the nucleoprotein. In terms of processing, envelope polyprotein precursor is quickly cleaved in vivo just after synthesis, presumably by host signal peptidase.

It localises to the virion membrane. The protein resides in the host cell surface. It is found in the host Golgi apparatus membrane. The protein localises to the host endoplasmic reticulum membrane. Its subcellular location is the host mitochondrion. Forms homotetramers with glycoprotein C at the surface of the virion. Attaches the virion to host cell receptors including integrin ITGAV/ITGB3. This attachment induces virion internalization predominantly through clathrin-dependent endocytosis. Mediates the assembly and budding of infectious virus particles through its interaction with the nucleocapsid protein and the viral genome. May dysregulate normal immune and endothelial cell responses through an ITAM motif. Translocates to mitochondria, binds to host TUFM and recruits MAP1LC3B. These interactions induce mitochondrial autophagy and therefore destruction of host MAVS leading to inhibition of type I interferon (IFN) responses. Concomitant breakdown of glycoprotein N is apparently prevented by the nucleoprotein that may inhibit Gn-stimulated autophagosome-lysosome fusion. Interacts with the viral genomic RNA. Functionally, forms heterooctamers with glycoprotein N at the surface of the virion. Attaches the virion to host cell receptors including integrin ITGAV/ITGB3. This attachment induces virion internalization predominantly through clathrin-dependent endocytosis. Class II fusion protein that promotes fusion of viral membrane with host endosomal membrane after endocytosis of the virion. This is Envelopment polyprotein (GP) from Homo sapiens (Human).